We begin with the raw amino-acid sequence, 189 residues long: GMP synthase [glutamine-hydrolyzing] subunit A (189 aa).

Positions 5–189 (KILVVNNYGQ…MNFFEVCDLY (185 aa)) constitute a Glutamine amidotransferase type-1 domain. Residue Cys79 is the Nucleophile of the active site. Residues His166 and Glu168 contribute to the active site.

Heterodimer composed of a glutamine amidotransferase subunit (A) and a GMP-binding subunit (B).

The enzyme catalyses XMP + L-glutamine + ATP + H2O = GMP + L-glutamate + AMP + diphosphate + 2 H(+). It participates in purine metabolism; GMP biosynthesis; GMP from XMP (L-Gln route): step 1/1. Its function is as follows. Catalyzes the synthesis of GMP from XMP. The polypeptide is GMP synthase [glutamine-hydrolyzing] subunit A (Methanosarcina mazei (strain ATCC BAA-159 / DSM 3647 / Goe1 / Go1 / JCM 11833 / OCM 88) (Methanosarcina frisia)).